Consider the following 39-residue polypeptide: Contryphan-Cal1 (39 aa).

An N-terminal signal peptide occupies residues 1–20 (MTRTAVLLLTLLFLVAMAAS). The cysteines at positions 29 and 35 are disulfide-linked.

Expressed by the venom duct.

Its subcellular location is the secreted. Its function is as follows. Probable neurotoxin. The polypeptide is Contryphan-Cal1 (Californiconus californicus (California cone)).